A 111-amino-acid chain; its full sequence is Glutaredoxin-C2 (111 aa).

The Glutaredoxin domain maps to 3 to 103 (MQKAKEIVNS…PLLTEAGAIA (101 aa)). C23 and C26 form a disulfide bridge.

Belongs to the glutaredoxin family. CPYC subfamily.

Its subcellular location is the cytoplasm. Its function is as follows. Has a glutathione-disulfide oxidoreductase activity in the presence of NADPH and glutathione reductase. Reduces low molecular weight disulfides and proteins. This Arabidopsis thaliana (Mouse-ear cress) protein is Glutaredoxin-C2 (GRXC2).